We begin with the raw amino-acid sequence, 91 residues long: Small ribosomal subunit protein uS19 (91 aa).

The protein belongs to the universal ribosomal protein uS19 family.

Functionally, protein S19 forms a complex with S13 that binds strongly to the 16S ribosomal RNA. The chain is Small ribosomal subunit protein uS19 from Metamycoplasma arthritidis (strain 158L3-1) (Mycoplasma arthritidis).